A 1086-amino-acid chain; its full sequence is Lysine-specific demethylase 4B (1086 aa).

In terms of domain architecture, JmjN spans 15–57; the sequence is IMTFRPTMDEFRDFNRYVAYIESQGAHRAGLAKIIPPKEWKPR. 2-oxoglutarate is bound at residue Tyr133. One can recognise a JmjC domain in the interval 146-309; the sequence is VAQWNIGNLR…YGKVATQCTC (164 aa). 2 residues coordinate Fe cation: His189 and Glu191. Residues Asn199 and Lys207 each coordinate 2-oxoglutarate. Residues Cys235 and His241 each coordinate Zn(2+). Lys242 is a 2-oxoglutarate binding site. Residue His277 coordinates Fe cation. Residues Cys307 and Cys309 each coordinate Zn(2+). Basic and acidic residues predominate over residues 379–395; that stretch reads SRPWRKAEEERRREPTR. Disordered stretches follow at residues 379-536 and 575-624; these read SRPW…PPGA and PMEL…LSVV. The span at 401-410 shows a compositional bias: basic residues; that stretch reads SHRRRSQPKK. Positions 441 to 450 are enriched in acidic residues; the sequence is MPEDEEEEEL. The segment covering 456–467 has biased composition (basic and acidic residues); it reads HEAEGVEEDGRG. Residues 468–480 show a composition bias toward basic residues; it reads KPRPTKARNKKKT. Over residues 512-522 the composition is skewed to low complexity; that stretch reads GPAMGPMAAEG. The segment covering 585 to 597 has biased composition (polar residues); it reads QAQAGDSQGTTPF. The residue at position 599 (Lys599) is an N6-acetyllysine. The PHD-type 1 zinc-finger motif lies at 719-777; sequence MCFTSSGENTEPLPANSYVGEDGTSPLISCAHCCLQVHASCYGVRPELAKEGWTCSRCA. The C2HC pre-PHD-type zinc finger occupies 782 to 815; it reads TAECCLCNLRGGALQRTTEHRWIHVICAIAVPEV. The PHD-type 2 zinc finger occupies 838–895; that stretch reads LKCIYCRKRMKRVSGACIQCSYEHCSTSFHVTCAHAAGVLMEPDDWPYVVSITCLKHR. Tudor domains lie at 905–962 and 963–1019; these read RTVS…CLRL and GPPP…EELP. Residues 1024-1043 are disordered; the sequence is SRLSLSTGTPQEPSFSGDDV. Positions 1026-1037 are enriched in polar residues; it reads LSLSTGTPQEPS.

This sequence belongs to the JHDM3 histone demethylase family. It depends on Fe(2+) as a cofactor.

It localises to the nucleus. It catalyses the reaction N(6),N(6),N(6)-trimethyl-L-lysyl(9)-[histone H3] + 2 2-oxoglutarate + 2 O2 = N(6)-methyl-L-lysyl(9)-[histone H3] + 2 formaldehyde + 2 succinate + 2 CO2. Histone demethylase that specifically demethylates 'Lys-9' of histone H3, thereby playing a role in histone code. Does not demethylate histone H3 'Lys-4', H3 'Lys-27', H3 'Lys-36' nor H4 'Lys-20'. Only able to demethylate trimethylated H3 'Lys-9', with a weaker activity than KDM4A, KDM4C and KDM4D. Demethylation of Lys residue generates formaldehyde and succinate. Plays a critical role in the development of the central nervous system (CNS). The chain is Lysine-specific demethylase 4B (Kdm4b) from Mus musculus (Mouse).